The primary structure comprises 225 residues: NAD(P)H-quinone oxidoreductase subunit K, chloroplastic (225 aa).

Cysteine 43, cysteine 44, cysteine 108, and cysteine 139 together coordinate [4Fe-4S] cluster.

The protein belongs to the complex I 20 kDa subunit family. In terms of assembly, NDH is composed of at least 16 different subunits, 5 of which are encoded in the nucleus. It depends on [4Fe-4S] cluster as a cofactor.

Its subcellular location is the plastid. The protein localises to the chloroplast thylakoid membrane. The catalysed reaction is a plastoquinone + NADH + (n+1) H(+)(in) = a plastoquinol + NAD(+) + n H(+)(out). It carries out the reaction a plastoquinone + NADPH + (n+1) H(+)(in) = a plastoquinol + NADP(+) + n H(+)(out). Its function is as follows. NDH shuttles electrons from NAD(P)H:plastoquinone, via FMN and iron-sulfur (Fe-S) centers, to quinones in the photosynthetic chain and possibly in a chloroplast respiratory chain. The immediate electron acceptor for the enzyme in this species is believed to be plastoquinone. Couples the redox reaction to proton translocation, and thus conserves the redox energy in a proton gradient. This is NAD(P)H-quinone oxidoreductase subunit K, chloroplastic from Platanus occidentalis (Sycamore).